The sequence spans 179 residues: Large ribosomal subunit protein uL6 (179 aa).

Belongs to the universal ribosomal protein uL6 family. Part of the 50S ribosomal subunit.

This protein binds to the 23S rRNA, and is important in its secondary structure. It is located near the subunit interface in the base of the L7/L12 stalk, and near the tRNA binding site of the peptidyltransferase center. The polypeptide is Large ribosomal subunit protein uL6 (Mycobacterium avium (strain 104)).